The following is a 253-amino-acid chain: Triosephosphate isomerase (253 aa).

A substrate-binding site is contributed by Asn-8–Lys-10. The active-site Electrophile is the His-93. The Proton acceptor role is filled by Glu-165. Substrate-binding positions include Gly-171, Ser-210, and Gly-231–Gly-232.

Belongs to the triosephosphate isomerase family. Homodimer.

The protein resides in the cytoplasm. It catalyses the reaction D-glyceraldehyde 3-phosphate = dihydroxyacetone phosphate. Its pathway is carbohydrate biosynthesis; gluconeogenesis. It participates in carbohydrate degradation; glycolysis; D-glyceraldehyde 3-phosphate from glycerone phosphate: step 1/1. In terms of biological role, involved in the gluconeogenesis. Catalyzes stereospecifically the conversion of dihydroxyacetone phosphate (DHAP) to D-glyceraldehyde-3-phosphate (G3P). The polypeptide is Triosephosphate isomerase (Francisella philomiragia subsp. philomiragia (strain ATCC 25017 / CCUG 19701 / FSC 153 / O#319-036)).